We begin with the raw amino-acid sequence, 252 residues long: Indole-3-glycerol phosphate synthase (252 aa).

It belongs to the TrpC family.

It catalyses the reaction 1-(2-carboxyphenylamino)-1-deoxy-D-ribulose 5-phosphate + H(+) = (1S,2R)-1-C-(indol-3-yl)glycerol 3-phosphate + CO2 + H2O. Its pathway is amino-acid biosynthesis; L-tryptophan biosynthesis; L-tryptophan from chorismate: step 4/5. The chain is Indole-3-glycerol phosphate synthase from Bacillus licheniformis (strain ATCC 14580 / DSM 13 / JCM 2505 / CCUG 7422 / NBRC 12200 / NCIMB 9375 / NCTC 10341 / NRRL NRS-1264 / Gibson 46).